Reading from the N-terminus, the 207-residue chain is Guanylate kinase (207 aa).

The Guanylate kinase-like domain maps to 4 to 184 (GTLYIVSAPS…ALSDLKTIIR (181 aa)). Residue 11 to 18 (APSGAGKS) participates in ATP binding.

Belongs to the guanylate kinase family.

It localises to the cytoplasm. It catalyses the reaction GMP + ATP = GDP + ADP. The catalysed reaction is dZMP + ATP = dZDP + ADP. It functions in the pathway purine metabolism. Functionally, essential for recycling GMP and indirectly, cGMP. In terms of biological role, (Microbial infection) Catalyzes the phosphorylation of dZMP to dZDP, when the bacterium is infected by a phage that produces the substrate for the synthesis of dZTP (2- amino-2'-deoxyadenosine 5'-triphosphate), which is then used by the phage as a DNA polymerase substrate. This is Guanylate kinase from Salmonella choleraesuis (strain SC-B67).